A 389-amino-acid polypeptide reads, in one-letter code: Chalcone synthase 3 (389 aa).

Residue Cys-164 is part of the active site.

It belongs to the thiolase-like superfamily. Chalcone/stilbene synthases family.

It carries out the reaction (E)-4-coumaroyl-CoA + 3 malonyl-CoA + 3 H(+) = 2',4,4',6'-tetrahydroxychalcone + 3 CO2 + 4 CoA. It participates in secondary metabolite biosynthesis; flavonoid biosynthesis. Functionally, the primary product of this enzyme is 4,2',4',6'-tetrahydroxychalcone (also termed naringenin-chalcone or chalcone) which can under specific conditions spontaneously isomerize into naringenin. The polypeptide is Chalcone synthase 3 (CHS3) (Camellia sinensis (Tea plant)).